A 76-amino-acid polypeptide reads, in one-letter code: Omega-conotoxin-like TxMKLT1-0141 (76 aa).

The N-terminal stretch at 1 to 22 (MKLTCMMIVAVLFLTAWTFATA) is a signal peptide. Positions 23 to 50 (DDSSNGLENLFPKAHHEMKNPEASKLNE) are excised as a propeptide. Disulfide bonds link Cys-52–Cys-67, Cys-59–Cys-70, and Cys-66–Cys-75.

It belongs to the conotoxin O1 superfamily. As to expression, expressed by the venom duct.

The protein resides in the secreted. In terms of biological role, omega-conotoxins act at presynaptic membranes, they bind and block voltage-gated calcium channels (Cav). In Conus textile (Cloth-of-gold cone), this protein is Omega-conotoxin-like TxMKLT1-0141.